A 259-amino-acid chain; its full sequence is Hydroxyacylglutathione hydrolase (259 aa).

Positions 56, 58, 60, 61, 112, 133, and 171 each coordinate Zn(2+).

The protein belongs to the metallo-beta-lactamase superfamily. Glyoxalase II family. In terms of assembly, monomer. It depends on Zn(2+) as a cofactor.

The enzyme catalyses an S-(2-hydroxyacyl)glutathione + H2O = a 2-hydroxy carboxylate + glutathione + H(+). It participates in secondary metabolite metabolism; methylglyoxal degradation; (R)-lactate from methylglyoxal: step 2/2. In terms of biological role, thiolesterase that catalyzes the hydrolysis of S-D-lactoyl-glutathione to form glutathione and D-lactic acid. The polypeptide is Hydroxyacylglutathione hydrolase (Pseudomonas putida (strain W619)).